The sequence spans 695 residues: tRNA wybutosine-synthesizing protein 4 (695 aa).

Residues lysine 38, arginine 88, glycine 115, 146–147 (DY), 196–197 (DL), and glutamate 224 each bind S-adenosyl-L-methionine. The Proton donor; for both methylation and methoxycarbonylation activities role is filled by arginine 88. Catalysis depends on tyrosine 229, which acts as the Proton acceptor; for methoxycarbonylation activity.

The protein belongs to the methyltransferase superfamily. LCMT family.

The protein resides in the cytoplasm. It localises to the mitochondrion. The enzyme catalyses 7-[(3S)-3-amino-3-carboxypropyl]wyosine(37) in tRNA(Phe) + S-adenosyl-L-methionine = 7-[(3S)-(3-amino-3-methoxycarbonyl)propyl]wyosine(37) in tRNA(Phe) + S-adenosyl-L-homocysteine. It catalyses the reaction 7-[(3S)-(3-amino-3-methoxycarbonyl)propyl]wyosine(37) in tRNA(Phe) + S-adenosyl-L-methionine + CO2 = wybutosine(37) in tRNA(Phe) + S-adenosyl-L-homocysteine + 2 H(+). It functions in the pathway tRNA modification; wybutosine-tRNA(Phe) biosynthesis. Its function is as follows. S-adenosyl-L-methionine-dependent methyltransferase that acts as a component of the wybutosine biosynthesis pathway. Wybutosine is a hyper modified guanosine with a tricyclic base found at the 3'-position adjacent to the anticodon of eukaryotic phenylalanine tRNA. Catalyzes the final 2 independent reactions, methylation of the alpha-carboxy group of wybutosine-72 to form wybutosine-58, and methoxycarbonylation of alpha-amino group of wybutosine-58 through the fixation of CO(2) to complete wybutosine. This Saccharomyces cerevisiae (strain ATCC 204508 / S288c) (Baker's yeast) protein is tRNA wybutosine-synthesizing protein 4 (PPM2).